The primary structure comprises 221 residues: MKAVIYHAFSHKEAKDHDVQELGTQRAEAFVRAFLKQSIPHMSQQDCESHLQRKAVILEYFTRLKPKPRPKKKSKGLSAKQRRELRLFDIKPEQQRYSLFLPLHELWKQYIRDLCNGLKPDTQPQMIQAKLLKADLHGAVISVTKSKCPSYVGVTGILLQETKHVFKIITKEDHLKVIPKQNCVFTIEIDDFISYIYGSKFQLRASERSAKKFKAKGTIDL.

Serine 10 carries the phosphoserine modification.

It belongs to the eukaryotic/archaeal RNase P protein component 1 family. In terms of assembly, component of nuclear RNase P and RNase MRP ribonucleoproteins. RNase P consists of a catalytic RNA moiety and 10 different protein chains; POP1, POP4, POP5, POP7, RPP14, RPP21, RPP25, RPP30, RPP38 and RPP40. Within the RNase P complex, POP1, POP7 and RPP25 form the 'finger' subcomplex, POP5, RPP14, RPP40 and homodimeric RPP30 form the 'palm' subcomplex, and RPP21, POP4 and RPP38 form the 'wrist' subcomplex. All subunits of the RNase P complex interact with the catalytic RNA. Several subunits of RNase P are also part of the RNase MRP complex. RNase MRP consists of a catalytic RNA moiety and about 8 protein subunits; POP1, POP7, RPP25, RPP30, RPP38, RPP40 and possibly also POP4 and POP5.

Its subcellular location is the nucleus. It is found in the nucleolus. In terms of biological role, component of ribonuclease P, a ribonucleoprotein complex that generates mature tRNA molecules by cleaving their 5'-ends. The protein is Ribonuclease P protein subunit p29 (Pop4) of Rattus norvegicus (Rat).